The sequence spans 448 residues: Hydroxycinnamoyl-CoA:piscidic acid hydroxycinnamoyltransferase (448 aa).

Catalysis depends on proton acceptor residues His-153 and Asp-395.

The protein belongs to the plant acyltransferase family. As to expression, highly expressed in root and rhizome. Expressed in senescent leaf and callus tissues. Expressed in detached leaf treated for 18 hours with ethephon, methyl jasmonate, salicylic acid or illuminated for 24 hours with UV light. Not expressed in mature leaf. Expressed at low levels in leaves and flowers.

The catalysed reaction is (2R,3S)-piscidate + (E)-4-coumaroyl-CoA = cimicifugate K + CoA. It carries out the reaction (2R,3S)-piscidate + (E)-caffeoyl-CoA = cimicifugate D + CoA. The enzyme catalyses (2R,3S)-piscidate + (E)-sinapoyl-CoA = cimicifugate J + CoA. It catalyses the reaction (2R,3S)-piscidate + (E)-feruloyl-CoA = cimicifugate E + CoA. It participates in phenylpropanoid metabolism. In terms of biological role, catalyzes the formation of cimicifugic acids. Uses hydroxycinnamoyl-CoA thioesters as hydroxycinnamoyl donor substrates. Has a strict specificity for piscidic acid as an acceptor substrate as none of the various other acceptors tested including 4-hydroxyphenyllactic acid, malate, spermidine or tetrahydroxyhexanedioic acid are substrates. Donor substrates include 4-coumaroyl-CoA, caffeoyl-CoA, sinapoyl-CoA and feruloyl-CoA. No activity with cinnamoyl-CoA, isoferuloyl-CoA, 3,4-dimethoxycinnamoyl-CoA or 3,4-dihydroxybenzoyl-CoA as donors. In the reverse reaction with fukinolic acid and CoA as substrates, a formation of fukiic acid is evident. Hence, fukiic acid may also serve as an acceptor substrate. Involved in the biosynthesis of cimicifugic and possibly fukinolic acids. The sequence is that of Hydroxycinnamoyl-CoA:piscidic acid hydroxycinnamoyltransferase from Actaea racemosa (Black cohosh).